The primary structure comprises 805 residues: Leucine--tRNA ligase (805 aa).

A 'HIGH' region motif is present at residues 40–51 (PYPSGSGLHVGH). Positions 576–580 (KMSKS) match the 'KMSKS' region motif. K579 is an ATP binding site.

It belongs to the class-I aminoacyl-tRNA synthetase family.

It localises to the cytoplasm. It carries out the reaction tRNA(Leu) + L-leucine + ATP = L-leucyl-tRNA(Leu) + AMP + diphosphate. This is Leucine--tRNA ligase from Chloroherpeton thalassium (strain ATCC 35110 / GB-78).